A 212-amino-acid chain; its full sequence is Ras-related protein Rab-2A (212 aa).

Ala2 is subject to N-acetylalanine. Residues 2–19 form a required for interaction with PRKCI region; that stretch reads AYAYLFKYIIIGDTGVGK. Gly16, Val17, Gly18, Lys19, Ser20, Cys21, and Thr38 together coordinate GTP. Ser20 is a binding site for Mg(2+). The Switch 1 signature appears at 37–42; the sequence is LTIGVE. Mg(2+) contacts are provided by Thr38 and Asp61. A Switch 2 motif is present at residues 63 to 72; the sequence is AGQESFRSIT. Positions 64, 119, 120, 122, 150, and 151 each coordinate GTP. A disordered region spans residues 190–212; it reads QHAATNASHGSNQGGQQAGGGCC. Residues 201 to 212 show a composition bias toward gly residues; sequence NQGGQQAGGGCC. S-geranylgeranyl cysteine attachment occurs at residues Cys211 and Cys212.

Belongs to the small GTPase superfamily. Rab family. As to quaternary structure, interacts with PRKCI. Interacts with TRIP11. Interacts (in GTP-bound form) with GARIN1B. Interacts (GTP-bound) with HOPS complex component VPS39; interaction contributes to obtaining a functional HOPS complex that promotes autophagosome-lysosome membrane fusion driven by STX17-SNAP29-VAMP8. Interacts with VPS41. Requires Mg(2+) as cofactor. Prenylated. Prenylation is required for association with cellular membranes.

Its subcellular location is the endoplasmic reticulum-Golgi intermediate compartment membrane. The protein resides in the melanosome. It is found in the endoplasmic reticulum membrane. The protein localises to the golgi apparatus membrane. It localises to the cytoplasmic vesicle. Its subcellular location is the secretory vesicle. The protein resides in the acrosome. It is found in the autophagosome membrane. It carries out the reaction GTP + H2O = GDP + phosphate + H(+). With respect to regulation, regulated by guanine nucleotide exchange factors (GEFs) which promote the exchange of bound GDP for free GTP, GTPase activating proteins (GAPs) which increase the GTP hydrolysis activity, and GDP dissociation inhibitors (GDIs) which inhibit the dissociation of the nucleotide from the GTPase. Functionally, the small GTPases Rab are key regulators of intracellular membrane trafficking, from the formation of transport vesicles to their fusion with membranes. Rabs cycle between active GTP-bound and inactive GDP-bound states. In their active state, drive transport of vesicular carriers from donor organelles to acceptor organelles to regulate the membrane traffic that maintains organelle identity and morphology. RAB2A regulates autophagy by promoting autophagosome-lysosome fusion via recruitment of the HOPS endosomal tethering complex; this process involves autophagosomal RAB2A and lysosomal RAB39A recruitment of HOPS subcomplexes VPS39-VPS11 and VPS41-VPS16-VPS18-VPS33A, respectively, which assemble into a functional complex to mediate membrane tethering and SNAREs-driven membrane fusion. Required for protein transport from the endoplasmic reticulum to the Golgi complex. Regulates the compacted morphology of the Golgi. Together with RAB2B, redundantly required for efficient autophagic flux. In Mus musculus (Mouse), this protein is Ras-related protein Rab-2A.